The following is a 350-amino-acid chain: S-adenosylmethionine:tRNA ribosyltransferase-isomerase (350 aa).

It belongs to the QueA family. As to quaternary structure, monomer.

It is found in the cytoplasm. The catalysed reaction is 7-aminomethyl-7-carbaguanosine(34) in tRNA + S-adenosyl-L-methionine = epoxyqueuosine(34) in tRNA + adenine + L-methionine + 2 H(+). The protein operates within tRNA modification; tRNA-queuosine biosynthesis. In terms of biological role, transfers and isomerizes the ribose moiety from AdoMet to the 7-aminomethyl group of 7-deazaguanine (preQ1-tRNA) to give epoxyqueuosine (oQ-tRNA). The chain is S-adenosylmethionine:tRNA ribosyltransferase-isomerase from Bacillus cereus (strain G9842).